A 340-amino-acid chain; its full sequence is MTVTMQYEKDVTVAALDGKRIAVIGYGSQGHAHAQNLRDTGHDVIIGVRAGKSFDKAKEDGFETFEVAEAAKQADVIMILAPDEIQADLYNEEIAPNLEAGNALGFAHGFNVHFEFIKVPADVDVFMCAPKGPGHLVRRTFEEGFGVPALYAVYQDATGNAKHIAMDWAKGVGSARVGLLETTFKEETEEDLFGEQAVLCGGLTALMQAGFEVLTEAGYAPELAYFEVLHEMKLIVDLVYEGGFKKMRQSISNTAEFGDYVSGPRVITDQVKENMKAVLADIQSGKFANDFVNDYKAGRPRMEAYRKEAENLEIEKVGAELRKAMPFVGRNDDDAFKIYN.

One can recognise a KARI N-terminal Rossmann domain in the interval Met-1–Thr-182. NADP(+)-binding positions include Tyr-26–Gln-29, Arg-49, Ser-53, and Asp-83–Gln-86. His-108 is an active-site residue. An NADP(+)-binding site is contributed by Gly-134. In terms of domain architecture, KARI C-terminal knotted spans Thr-183 to Val-328. Residues Asp-191, Glu-195, Glu-227, and Glu-231 each coordinate Mg(2+). Residue Ser-252 participates in substrate binding.

Belongs to the ketol-acid reductoisomerase family. Mg(2+) serves as cofactor.

It catalyses the reaction (2R)-2,3-dihydroxy-3-methylbutanoate + NADP(+) = (2S)-2-acetolactate + NADPH + H(+). It carries out the reaction (2R,3R)-2,3-dihydroxy-3-methylpentanoate + NADP(+) = (S)-2-ethyl-2-hydroxy-3-oxobutanoate + NADPH + H(+). Its pathway is amino-acid biosynthesis; L-isoleucine biosynthesis; L-isoleucine from 2-oxobutanoate: step 2/4. It functions in the pathway amino-acid biosynthesis; L-valine biosynthesis; L-valine from pyruvate: step 2/4. Functionally, involved in the biosynthesis of branched-chain amino acids (BCAA). Catalyzes an alkyl-migration followed by a ketol-acid reduction of (S)-2-acetolactate (S2AL) to yield (R)-2,3-dihydroxy-isovalerate. In the isomerase reaction, S2AL is rearranged via a Mg-dependent methyl migration to produce 3-hydroxy-3-methyl-2-ketobutyrate (HMKB). In the reductase reaction, this 2-ketoacid undergoes a metal-dependent reduction by NADPH to yield (R)-2,3-dihydroxy-isovalerate. The sequence is that of Ketol-acid reductoisomerase (NADP(+)) from Streptococcus suis (strain 98HAH33).